The sequence spans 833 residues: Translation initiation factor IF-2 (833 aa).

Positions Met-1–Ala-247 are disordered. 2 stretches are compositionally biased toward basic and acidic residues: residues Gln-53–Lys-99 and Val-110–Glu-152. The span at Leu-153–Tyr-166 shows a compositional bias: acidic residues. Over residues Lys-187–Lys-203 the composition is skewed to basic residues. Positions Gly-204–Met-227 are enriched in basic and acidic residues. Residues Thr-333–Thr-502 form the tr-type G domain. The tract at residues Gly-342–Thr-349 is G1. Gly-342–Thr-349 serves as a coordination point for GTP. The tract at residues Gly-367 to His-371 is G2. Residues Asp-388–Gly-391 are G3. Residues Asp-388–His-392 and Asn-442–Asp-445 contribute to the GTP site. The segment at Asn-442–Asp-445 is G4. The segment at Ser-478–Lys-480 is G5.

The protein belongs to the TRAFAC class translation factor GTPase superfamily. Classic translation factor GTPase family. IF-2 subfamily.

Its subcellular location is the cytoplasm. In terms of biological role, one of the essential components for the initiation of protein synthesis. Protects formylmethionyl-tRNA from spontaneous hydrolysis and promotes its binding to the 30S ribosomal subunits. Also involved in the hydrolysis of GTP during the formation of the 70S ribosomal complex. This chain is Translation initiation factor IF-2 (infB), found in Pasteurella multocida (strain Pm70).